Here is a 387-residue protein sequence, read N- to C-terminus: Transmembrane protein 120 homolog (387 aa).

Residues 1–39 adopt a coiled-coil conformation; it reads MNIDSLKNEWEELNKEFAELESCNRRYIELLEQLHSHQQ. The N-linked (GlcNAc...) asparagine glycan is linked to Asn-111. The next 6 helical transmembrane spans lie at 130-150, 155-175, 191-211, 216-238, 264-284, and 302-322; these read FKLI…IFNY, LAFI…ESIL, FIST…HWQI, FMYF…KGLL, GLSF…YNAW, and VMSG…LWVV. Residues 346-387 form a disordered region; the sequence is RKEMKNSASDLDLSSGSKLSPTATTTTSIATATQTPAEKKET. Residues Ser-352, Ser-354, and Ser-365 each carry the phosphoserine modification. Positions 352 to 381 are enriched in low complexity; it reads SASDLDLSSGSKLSPTATTTTSIATATQTP.

The protein belongs to the TMEM120 family.

The protein localises to the membrane. The sequence is that of Transmembrane protein 120 homolog from Drosophila melanogaster (Fruit fly).